An 89-amino-acid polypeptide reads, in one-letter code: Small ribosomal subunit protein uS14A (89 aa).

Belongs to the universal ribosomal protein uS14 family. Part of the 30S ribosomal subunit. Contacts proteins S3 and S10.

In terms of biological role, binds 16S rRNA, required for the assembly of 30S particles and may also be responsible for determining the conformation of the 16S rRNA at the A site. The sequence is that of Small ribosomal subunit protein uS14A from Listeria monocytogenes serotype 4b (strain F2365).